The following is a 359-amino-acid chain: 4-hydroxy-3-methylbut-2-en-1-yl diphosphate synthase (flavodoxin) (359 aa).

4 residues coordinate [4Fe-4S] cluster: cysteine 264, cysteine 267, cysteine 299, and glutamate 306.

It belongs to the IspG family. Requires [4Fe-4S] cluster as cofactor.

It catalyses the reaction (2E)-4-hydroxy-3-methylbut-2-enyl diphosphate + oxidized [flavodoxin] + H2O + 2 H(+) = 2-C-methyl-D-erythritol 2,4-cyclic diphosphate + reduced [flavodoxin]. It participates in isoprenoid biosynthesis; isopentenyl diphosphate biosynthesis via DXP pathway; isopentenyl diphosphate from 1-deoxy-D-xylulose 5-phosphate: step 5/6. Its function is as follows. Converts 2C-methyl-D-erythritol 2,4-cyclodiphosphate (ME-2,4cPP) into 1-hydroxy-2-methyl-2-(E)-butenyl 4-diphosphate. The chain is 4-hydroxy-3-methylbut-2-en-1-yl diphosphate synthase (flavodoxin) from Helicobacter pylori (strain J99 / ATCC 700824) (Campylobacter pylori J99).